A 103-amino-acid chain; its full sequence is Co-chaperonin GroES (103 aa).

Belongs to the GroES chaperonin family. Heptamer of 7 subunits arranged in a ring. Interacts with the chaperonin GroEL.

The protein resides in the cytoplasm. In terms of biological role, together with the chaperonin GroEL, plays an essential role in assisting protein folding. The GroEL-GroES system forms a nano-cage that allows encapsulation of the non-native substrate proteins and provides a physical environment optimized to promote and accelerate protein folding. GroES binds to the apical surface of the GroEL ring, thereby capping the opening of the GroEL channel. This Synechococcus sp. (strain JA-3-3Ab) (Cyanobacteria bacterium Yellowstone A-Prime) protein is Co-chaperonin GroES.